A 692-amino-acid chain; its full sequence is Polyphosphate kinase (692 aa).

Asn57 is an ATP binding site. Mg(2+) is bound by residues Arg383 and Arg413. The active-site Phosphohistidine intermediate is His443. Residues Tyr476, Arg572, and His600 each contribute to the ATP site.

This sequence belongs to the polyphosphate kinase 1 (PPK1) family. Mg(2+) is required as a cofactor. In terms of processing, an intermediate of this reaction is the autophosphorylated ppk in which a phosphate is covalently linked to a histidine residue through a N-P bond.

It catalyses the reaction [phosphate](n) + ATP = [phosphate](n+1) + ADP. Catalyzes the reversible transfer of the terminal phosphate of ATP to form a long-chain polyphosphate (polyP). The protein is Polyphosphate kinase of Acinetobacter baumannii (strain AYE).